We begin with the raw amino-acid sequence, 572 residues long: Proline--tRNA ligase (572 aa).

Belongs to the class-II aminoacyl-tRNA synthetase family. ProS type 1 subfamily. As to quaternary structure, homodimer.

The protein localises to the cytoplasm. The enzyme catalyses tRNA(Pro) + L-proline + ATP = L-prolyl-tRNA(Pro) + AMP + diphosphate. Catalyzes the attachment of proline to tRNA(Pro) in a two-step reaction: proline is first activated by ATP to form Pro-AMP and then transferred to the acceptor end of tRNA(Pro). As ProRS can inadvertently accommodate and process non-cognate amino acids such as alanine and cysteine, to avoid such errors it has two additional distinct editing activities against alanine. One activity is designated as 'pretransfer' editing and involves the tRNA(Pro)-independent hydrolysis of activated Ala-AMP. The other activity is designated 'posttransfer' editing and involves deacylation of mischarged Ala-tRNA(Pro). The misacylated Cys-tRNA(Pro) is not edited by ProRS. The protein is Proline--tRNA ligase of Haemophilus influenzae (strain PittEE).